Consider the following 198-residue polypeptide: Recombination protein RecR (198 aa).

The C4-type zinc finger occupies 59-74; sequence CSLCCNYTDHDPCPIC. The region spanning 82-175 is the Toprim domain; that stretch reads TLLCIVEQPR…KVTRIAHGLP (94 aa).

It belongs to the RecR family.

In terms of biological role, may play a role in DNA repair. It seems to be involved in an RecBC-independent recombinational process of DNA repair. It may act with RecF and RecO. This is Recombination protein RecR from Desulfitobacterium hafniense (strain DSM 10664 / DCB-2).